An 86-amino-acid chain; its full sequence is Exodeoxyribonuclease 7 small subunit (86 aa).

The segment at 67–86 (LSDPAQPEASEPFDPPSHDG) is disordered.

This sequence belongs to the XseB family. As to quaternary structure, heterooligomer composed of large and small subunits.

Its subcellular location is the cytoplasm. It carries out the reaction Exonucleolytic cleavage in either 5'- to 3'- or 3'- to 5'-direction to yield nucleoside 5'-phosphates.. Bidirectionally degrades single-stranded DNA into large acid-insoluble oligonucleotides, which are then degraded further into small acid-soluble oligonucleotides. The protein is Exodeoxyribonuclease 7 small subunit of Stenotrophomonas maltophilia (strain K279a).